The chain runs to 355 residues: Chorismate synthase (355 aa).

R48 lines the NADP(+) pocket. Residues 125–127 (RSS), 238–239 (NA), G278, 293–297 (KPASS), and R319 each bind FMN.

It belongs to the chorismate synthase family. As to quaternary structure, homotetramer. FMNH2 serves as cofactor.

It catalyses the reaction 5-O-(1-carboxyvinyl)-3-phosphoshikimate = chorismate + phosphate. The protein operates within metabolic intermediate biosynthesis; chorismate biosynthesis; chorismate from D-erythrose 4-phosphate and phosphoenolpyruvate: step 7/7. Functionally, catalyzes the anti-1,4-elimination of the C-3 phosphate and the C-6 proR hydrogen from 5-enolpyruvylshikimate-3-phosphate (EPSP) to yield chorismate, which is the branch point compound that serves as the starting substrate for the three terminal pathways of aromatic amino acid biosynthesis. This reaction introduces a second double bond into the aromatic ring system. This is Chorismate synthase from Baumannia cicadellinicola subsp. Homalodisca coagulata.